The primary structure comprises 503 residues: Maturase K (503 aa).

This sequence belongs to the intron maturase 2 family. MatK subfamily.

The protein localises to the plastid. It is found in the chloroplast. Its function is as follows. Usually encoded in the trnK tRNA gene intron. Probably assists in splicing its own and other chloroplast group II introns. The chain is Maturase K from Rosa foetida (Austrian briar).